The sequence spans 530 residues: Bifunctional purine biosynthesis protein PurH (530 aa).

The region spanning 1–148 is the MGS-like domain; sequence MEQARPIRRA…KNHKDVAIVV (148 aa).

This sequence belongs to the PurH family.

It carries out the reaction (6R)-10-formyltetrahydrofolate + 5-amino-1-(5-phospho-beta-D-ribosyl)imidazole-4-carboxamide = 5-formamido-1-(5-phospho-D-ribosyl)imidazole-4-carboxamide + (6S)-5,6,7,8-tetrahydrofolate. The enzyme catalyses IMP + H2O = 5-formamido-1-(5-phospho-D-ribosyl)imidazole-4-carboxamide. It functions in the pathway purine metabolism; IMP biosynthesis via de novo pathway; 5-formamido-1-(5-phospho-D-ribosyl)imidazole-4-carboxamide from 5-amino-1-(5-phospho-D-ribosyl)imidazole-4-carboxamide (10-formyl THF route): step 1/1. The protein operates within purine metabolism; IMP biosynthesis via de novo pathway; IMP from 5-formamido-1-(5-phospho-D-ribosyl)imidazole-4-carboxamide: step 1/1. This chain is Bifunctional purine biosynthesis protein PurH, found in Aeromonas hydrophila subsp. hydrophila (strain ATCC 7966 / DSM 30187 / BCRC 13018 / CCUG 14551 / JCM 1027 / KCTC 2358 / NCIMB 9240 / NCTC 8049).